A 445-amino-acid chain; its full sequence is Methyl-CpG-binding domain protein 4-like protein (445 aa).

Residue D429 is part of the active site.

As to expression, isoform 1 and isoform 4: Expressed in leaves and flowers, but not in roots or stems.

It is found in the nucleus. Functionally, monofunctional DNA glycosylase targeting U:G and T:G mispairs. Excises uracil derivatives and exhibits a preference for a CpG sequence context, irrespective of the methylation status of the complementary strand. The activity follows a biphasic kinetics, with an initial burst of product accumulation followed by a slower phase. Specifically binds its reaction product. Triggers the base excision repair (BER) pathway. This chain is Methyl-CpG-binding domain protein 4-like protein, found in Arabidopsis thaliana (Mouse-ear cress).